Here is a 282-residue protein sequence, read N- to C-terminus: NAC domain-containing protein 1 (282 aa).

Positions leucine 9 to lysine 161 constitute an NAC domain. A DNA-binding region spans residues valine 106–threonine 167. Residues lysine 161–asparagine 188 are a coiled coil.

As to expression, expressed in roots, stem, flowers, and leaves.

The protein resides in the nucleus. Its function is as follows. Transcription factor that binds DNA motifs 5'-CGT[AG](5N)NACG[ACT][AC][AT][ACG][ACT]-3' and 5'-CACG[ACT][AC][AT][AGT][CT]-3' in target genes promoters. Promotes leaf senescence and reduces fruit yield and sugar content, probably by establishing abscisic acid (ABA) homeostasis. This chain is NAC domain-containing protein 1, found in Solanum lycopersicum (Tomato).